Here is a 179-residue protein sequence, read N- to C-terminus: Large ribosomal subunit protein uL5 (179 aa).

The protein belongs to the universal ribosomal protein uL5 family. Part of the 50S ribosomal subunit; part of the 5S rRNA/L5/L18/L25 subcomplex. Contacts the 5S rRNA and the P site tRNA. Forms a bridge to the 30S subunit in the 70S ribosome.

In terms of biological role, this is one of the proteins that bind and probably mediate the attachment of the 5S RNA into the large ribosomal subunit, where it forms part of the central protuberance. In the 70S ribosome it contacts protein S13 of the 30S subunit (bridge B1b), connecting the 2 subunits; this bridge is implicated in subunit movement. Contacts the P site tRNA; the 5S rRNA and some of its associated proteins might help stabilize positioning of ribosome-bound tRNAs. The chain is Large ribosomal subunit protein uL5 from Histophilus somni (strain 129Pt) (Haemophilus somnus).